Consider the following 263-residue polypeptide: Chymotrypsinogen B (263 aa).

A signal peptide spans 1-18; that stretch reads MAFLWLVSCFALVGATFG. Cystine bridges form between cysteine 19–cysteine 140, cysteine 60–cysteine 76, cysteine 154–cysteine 219, cysteine 186–cysteine 200, and cysteine 209–cysteine 238. In terms of domain architecture, Peptidase S1 spans 34-261; it reads IVNGEDAIPG…LMPWVQQILE (228 aa). The active-site Charge relay system is histidine 75. The residue at position 93 (serine 93) is a Phosphoserine. Aspartate 120 (charge relay system) is an active-site residue. Catalysis depends on serine 213, which acts as the Charge relay system.

It belongs to the peptidase S1 family.

The protein resides in the secreted. It is found in the extracellular space. It carries out the reaction Preferential cleavage: Tyr-|-Xaa, Trp-|-Xaa, Phe-|-Xaa, Leu-|-Xaa.. The sequence is that of Chymotrypsinogen B (Ctrb1) from Rattus norvegicus (Rat).